The sequence spans 146 residues: Cysteine protease inhibitor 3 (146 aa).

2 disulfides stabilise this stretch: Cys8-Cys60 and Cys109-Cys115.

It belongs to the protease inhibitor I3 (leguminous Kunitz-type inhibitor) family.

It localises to the vacuole. In terms of biological role, inhibitor of cysteine proteases. May protect the plant by inhibiting proteases of invading organisms. The sequence is that of Cysteine protease inhibitor 3 from Solanum tuberosum (Potato).